We begin with the raw amino-acid sequence, 383 residues long: DNA-directed RNA polymerase subunit alpha (383 aa).

Residues 1–240 (MEKKTGLIQF…NLFHQISPPL (240 aa)) are alpha N-terminal domain (alpha-NTD). Residues 306-383 (IDKQMNDSVN…RFNMELLPTK (78 aa)) are alpha C-terminal domain (alpha-CTD).

It belongs to the RNA polymerase alpha chain family. In plastids the minimal PEP RNA polymerase catalytic core is composed of four subunits: alpha, beta, beta', and beta''. When a (nuclear-encoded) sigma factor is associated with the core the holoenzyme is formed, which can initiate transcription.

It is found in the plastid. The protein localises to the chloroplast. It catalyses the reaction RNA(n) + a ribonucleoside 5'-triphosphate = RNA(n+1) + diphosphate. DNA-dependent RNA polymerase catalyzes the transcription of DNA into RNA using the four ribonucleoside triphosphates as substrates. This Staurastrum punctulatum (Green alga) protein is DNA-directed RNA polymerase subunit alpha.